Consider the following 392-residue polypeptide: Lipid-A-disaccharide synthase (392 aa).

This sequence belongs to the LpxB family.

It carries out the reaction a lipid X + a UDP-2-N,3-O-bis[(3R)-3-hydroxyacyl]-alpha-D-glucosamine = a lipid A disaccharide + UDP + H(+). It functions in the pathway bacterial outer membrane biogenesis; LPS lipid A biosynthesis. Condensation of UDP-2,3-diacylglucosamine and 2,3-diacylglucosamine-1-phosphate to form lipid A disaccharide, a precursor of lipid A, a phosphorylated glycolipid that anchors the lipopolysaccharide to the outer membrane of the cell. This Bradyrhizobium diazoefficiens (strain JCM 10833 / BCRC 13528 / IAM 13628 / NBRC 14792 / USDA 110) protein is Lipid-A-disaccharide synthase.